Consider the following 876-residue polypeptide: DNA topoisomerase 1 (876 aa).

One can recognise a Toprim domain in the interval 3 to 150 (KSLVIVESPA…RYKRVVFNEI (148 aa)). Glutamate 9 contributes to the Mg(2+) binding site. A disordered region spans residues 37 to 69 (LPTAGQTATPTGKAAAASTKKASTTDKEQQKRE). Residues 38 to 58 (PTAGQTATPTGKAAAASTKKA) show a composition bias toward low complexity. Residues 59–69 (STTDKEQQKRE) are compositionally biased toward basic and acidic residues. Residue aspartate 119 participates in Mg(2+) binding. The region spanning 166–582 (NMDGVNAQQA…EFFADFSRDL (417 aa)) is the Topo IA-type catalytic domain. Positions 200-205 (SAGRVQ) are interaction with DNA. Residue tyrosine 327 is the O-(5'-phospho-DNA)-tyrosine intermediate of the active site. 2 consecutive C4-type zinc fingers follow at residues 668 to 695 (CPIC…NPNC) and 717 to 742 (CDKC…NDAC).

It belongs to the type IA topoisomerase family. Monomer. Mg(2+) is required as a cofactor.

The enzyme catalyses ATP-independent breakage of single-stranded DNA, followed by passage and rejoining.. Functionally, releases the supercoiling and torsional tension of DNA, which is introduced during the DNA replication and transcription, by transiently cleaving and rejoining one strand of the DNA duplex. Introduces a single-strand break via transesterification at a target site in duplex DNA. The scissile phosphodiester is attacked by the catalytic tyrosine of the enzyme, resulting in the formation of a DNA-(5'-phosphotyrosyl)-enzyme intermediate and the expulsion of a 3'-OH DNA strand. The free DNA strand then undergoes passage around the unbroken strand, thus removing DNA supercoils. Finally, in the religation step, the DNA 3'-OH attacks the covalent intermediate to expel the active-site tyrosine and restore the DNA phosphodiester backbone. This chain is DNA topoisomerase 1, found in Vibrio cholerae serotype O1 (strain ATCC 39315 / El Tor Inaba N16961).